A 66-amino-acid chain; its full sequence is Large ribosomal subunit protein bL33c (66 aa).

It belongs to the bacterial ribosomal protein bL33 family.

It is found in the plastid. The protein resides in the chloroplast. This chain is Large ribosomal subunit protein bL33c, found in Oryza nivara (Indian wild rice).